Reading from the N-terminus, the 251-residue chain is Small ribosomal subunit protein uS2 (251 aa).

Belongs to the universal ribosomal protein uS2 family.

The protein is Small ribosomal subunit protein uS2 of Cereibacter sphaeroides (strain ATCC 17029 / ATH 2.4.9) (Rhodobacter sphaeroides).